Here is a 317-residue protein sequence, read N- to C-terminus: tRNA(Ile)-lysidine synthase (317 aa).

Position 30 to 35 (30 to 35) interacts with ATP; that stretch reads SGGSDS.

It belongs to the tRNA(Ile)-lysidine synthase family.

Its subcellular location is the cytoplasm. It carries out the reaction cytidine(34) in tRNA(Ile2) + L-lysine + ATP = lysidine(34) in tRNA(Ile2) + AMP + diphosphate + H(+). Ligates lysine onto the cytidine present at position 34 of the AUA codon-specific tRNA(Ile) that contains the anticodon CAU, in an ATP-dependent manner. Cytidine is converted to lysidine, thus changing the amino acid specificity of the tRNA from methionine to isoleucine. In Chlamydia abortus (strain DSM 27085 / S26/3) (Chlamydophila abortus), this protein is tRNA(Ile)-lysidine synthase.